The sequence spans 356 residues: Inactive ubiquitin thioesterase OTULINL (356 aa).

Residues methionine 1 to glycine 22 are disordered. The required for membrane binding stretch occupies residues methionine 1–lysine 83. The OTU domain maps to lysine 128–phenylalanine 356.

The protein belongs to the peptidase C65 family. Otulin subfamily. As to quaternary structure, does not bind ubiquitin or ubiquitin-like proteins.

It localises to the cytoplasm. Its subcellular location is the endoplasmic reticulum membrane. The protein localises to the nucleus envelope. Lacks deubiquitinase activity. This chain is Inactive ubiquitin thioesterase OTULINL, found in Homo sapiens (Human).